The sequence spans 349 residues: tRNA-specific 2-thiouridylase MnmA (349 aa).

ATP contacts are provided by residues 7–14 (GLSGGVDS) and L33. The active-site Nucleophile is C94. C94 and C193 are joined by a disulfide. Position 119 (G119) interacts with ATP. The segment at 143–145 (KDQ) is interaction with tRNA. C193 serves as the catalytic Cysteine persulfide intermediate. The interaction with tRNA stretch occupies residues 298–299 (RY).

This sequence belongs to the MnmA/TRMU family.

The protein localises to the cytoplasm. It catalyses the reaction S-sulfanyl-L-cysteinyl-[protein] + uridine(34) in tRNA + AH2 + ATP = 2-thiouridine(34) in tRNA + L-cysteinyl-[protein] + A + AMP + diphosphate + H(+). In terms of biological role, catalyzes the 2-thiolation of uridine at the wobble position (U34) of tRNA, leading to the formation of s(2)U34. This chain is tRNA-specific 2-thiouridylase MnmA, found in Gloeothece citriformis (strain PCC 7424) (Cyanothece sp. (strain PCC 7424)).